Here is a 357-residue protein sequence, read N- to C-terminus: D-alanine--D-alanine ligase (357 aa).

Residues 145–339 (KEVMLYHGIQ…YGDLVMDIVN (195 aa)) enclose the ATP-grasp domain. 172–225 (PFDFPVVVKPTSGGSSVGTHIIHNQEELESGLEDVFRFDNSAIVEEFTPGREFS) contributes to the ATP binding site. Mg(2+) contacts are provided by aspartate 294, glutamate 306, and asparagine 308.

Belongs to the D-alanine--D-alanine ligase family. Mg(2+) serves as cofactor. Requires Mn(2+) as cofactor.

It localises to the cytoplasm. The enzyme catalyses 2 D-alanine + ATP = D-alanyl-D-alanine + ADP + phosphate + H(+). It participates in cell wall biogenesis; peptidoglycan biosynthesis. In terms of biological role, cell wall formation. The sequence is that of D-alanine--D-alanine ligase from Lacticaseibacillus paracasei (strain ATCC 334 / BCRC 17002 / CCUG 31169 / CIP 107868 / KCTC 3260 / NRRL B-441) (Lactobacillus paracasei).